We begin with the raw amino-acid sequence, 132 residues long: uncharacterized protein (132 aa).

This is an uncharacterized protein from Caenorhabditis elegans.